The following is a 116-amino-acid chain: NADPH-dependent 7-cyano-7-deazaguanine reductase (116 aa).

Catalysis depends on C31, which acts as the Thioimide intermediate. Catalysis depends on D38, which acts as the Proton donor. Residues 53–55 and 72–73 each bind substrate; these read IEL and YE.

This sequence belongs to the GTP cyclohydrolase I family. QueF type 1 subfamily.

Its subcellular location is the cytoplasm. The catalysed reaction is 7-aminomethyl-7-carbaguanine + 2 NADP(+) = 7-cyano-7-deazaguanine + 2 NADPH + 3 H(+). It participates in tRNA modification; tRNA-queuosine biosynthesis. Functionally, catalyzes the NADPH-dependent reduction of 7-cyano-7-deazaguanine (preQ0) to 7-aminomethyl-7-deazaguanine (preQ1). This chain is NADPH-dependent 7-cyano-7-deazaguanine reductase, found in Chlorobaculum parvum (strain DSM 263 / NCIMB 8327) (Chlorobium vibrioforme subsp. thiosulfatophilum).